Here is a 292-residue protein sequence, read N- to C-terminus: Poly-beta-1,6-N-acetyl-D-glucosamine N-deacetylase (292 aa).

Residues 1–28 (MKYRKFIILVLSILIILPVSTLDGHHIA) form the signal peptide. A NodB homology domain is found at 114–292 (RSVWINFDDM…WDGFHEKDET (179 aa)).

Belongs to the polysaccharide deacetylase family.

The protein localises to the secreted. It localises to the cell wall. Its function is as follows. Catalyzes the N-deacetylation of poly-beta-1,6-N-acetyl-D-glucosamine (PNAG, also referred to as PIA), a biofilm adhesin polysaccharide. N-deacetylation is crucial for attachment of the polysaccharide to the bacterial cell surface; it leads to the introduction of positive charges in the otherwise neutral PIA polymer, allowing electrostatic interactions. The polypeptide is Poly-beta-1,6-N-acetyl-D-glucosamine N-deacetylase (icaB) (Staphylococcus aureus (strain COL)).